Consider the following 235-residue polypeptide: Small ribosomal subunit protein uS2 (235 aa).

It belongs to the universal ribosomal protein uS2 family.

The protein is Small ribosomal subunit protein uS2 of Geobacillus thermodenitrificans (strain NG80-2).